The following is a 72-amino-acid chain: Translation initiation factor IF-1 2 (72 aa).

The 72-residue stretch at 1 to 72 folds into the S1-like domain; it reads MAKEDVIEMQ…TKGRIVFRTK (72 aa).

This sequence belongs to the IF-1 family. As to quaternary structure, component of the 30S ribosomal translation pre-initiation complex which assembles on the 30S ribosome in the order IF-2 and IF-3, IF-1 and N-formylmethionyl-tRNA(fMet); mRNA recruitment can occur at any time during PIC assembly.

It is found in the cytoplasm. In terms of biological role, one of the essential components for the initiation of protein synthesis. Stabilizes the binding of IF-2 and IF-3 on the 30S subunit to which N-formylmethionyl-tRNA(fMet) subsequently binds. Helps modulate mRNA selection, yielding the 30S pre-initiation complex (PIC). Upon addition of the 50S ribosomal subunit IF-1, IF-2 and IF-3 are released leaving the mature 70S translation initiation complex. This Azoarcus sp. (strain BH72) protein is Translation initiation factor IF-1 2.